The following is a 100-amino-acid chain: Urease subunit gamma (100 aa).

It belongs to the urease gamma subunit family. As to quaternary structure, heterotrimer of UreA (gamma), UreB (beta) and UreC (alpha) subunits. Three heterotrimers associate to form the active enzyme.

Its subcellular location is the cytoplasm. The catalysed reaction is urea + 2 H2O + H(+) = hydrogencarbonate + 2 NH4(+). It functions in the pathway nitrogen metabolism; urea degradation; CO(2) and NH(3) from urea (urease route): step 1/1. This Photorhabdus laumondii subsp. laumondii (strain DSM 15139 / CIP 105565 / TT01) (Photorhabdus luminescens subsp. laumondii) protein is Urease subunit gamma.